We begin with the raw amino-acid sequence, 141 residues long: Zinc finger protein 593 homolog (141 aa).

The interval 1 to 32 is disordered; the sequence is MGRYSGHGGTHTKKKQYKRARSTKNRAKDIDQ. Over residues 10 to 25 the composition is skewed to basic residues; that stretch reads THTKKKQYKRARSTKN. The segment at 60-84 adopts a C2H2-type zinc-finger fold; it reads NYCIHCSKHFVTNEDLQSHIKGKPH.

It belongs to the ZNF593/BUD20 C2H2-type zinc-finger protein family. In terms of assembly, associates with pre-60S ribosomal particles; released from the pre-60S particle very early in the cytoplasm.

It localises to the nucleus. Its subcellular location is the cytoplasm. Functionally, involved in pre-60S ribosomal particles maturation by promoting the nuclear export of the 60S ribosome. The protein is Zinc finger protein 593 homolog of Dictyostelium discoideum (Social amoeba).